The sequence spans 257 residues: Imidazole glycerol phosphate synthase subunit HisF (257 aa).

Catalysis depends on residues Asp11 and Asp130.

This sequence belongs to the HisA/HisF family. In terms of assembly, heterodimer of HisH and HisF.

It localises to the cytoplasm. It catalyses the reaction 5-[(5-phospho-1-deoxy-D-ribulos-1-ylimino)methylamino]-1-(5-phospho-beta-D-ribosyl)imidazole-4-carboxamide + L-glutamine = D-erythro-1-(imidazol-4-yl)glycerol 3-phosphate + 5-amino-1-(5-phospho-beta-D-ribosyl)imidazole-4-carboxamide + L-glutamate + H(+). Its pathway is amino-acid biosynthesis; L-histidine biosynthesis; L-histidine from 5-phospho-alpha-D-ribose 1-diphosphate: step 5/9. IGPS catalyzes the conversion of PRFAR and glutamine to IGP, AICAR and glutamate. The HisF subunit catalyzes the cyclization activity that produces IGP and AICAR from PRFAR using the ammonia provided by the HisH subunit. In Shewanella sp. (strain MR-7), this protein is Imidazole glycerol phosphate synthase subunit HisF.